The chain runs to 88 residues: Putative membrane protein insertion efficiency factor (88 aa).

Residues 68–88 form a disordered region; sequence VPPPNSDTRARGEADARSHRL. Positions 75 to 88 are enriched in basic and acidic residues; the sequence is TRARGEADARSHRL.

Belongs to the UPF0161 family.

The protein resides in the cell inner membrane. Functionally, could be involved in insertion of integral membrane proteins into the membrane. The protein is Putative membrane protein insertion efficiency factor of Burkholderia orbicola (strain MC0-3).